Reading from the N-terminus, the 218-residue chain is Probable cutinase 3 (218 aa).

The first 17 residues, 1-17 (MSLRSVLVAALAALAVA), serve as a signal peptide directing secretion. Cystine bridges form between Cys41-Cys120 and Cys67-Cys81. Residue Ser131 is the Nucleophile of the active site. The cysteines at positions 182 and 189 are disulfide-linked. The active site involves Asp186. The Proton donor/acceptor role is filled by His199.

This sequence belongs to the cutinase family.

It localises to the secreted. The enzyme catalyses cutin + H2O = cutin monomers.. Functionally, catalyzes the hydrolysis of complex carboxylic polyesters found in the cell wall of plants. Degrades cutin, a macromolecule that forms the structure of the plant cuticle. This chain is Probable cutinase 3, found in Aspergillus terreus (strain NIH 2624 / FGSC A1156).